We begin with the raw amino-acid sequence, 664 residues long: DNA mismatch repair protein MutL (664 aa).

Residues 382–447 (RKAGQEQQLQ…YGEPAPSKQQ (66 aa)) form a disordered region. The span at 427–436 (RHTTSSNQSE) shows a compositional bias: polar residues.

Belongs to the DNA mismatch repair MutL/HexB family.

This protein is involved in the repair of mismatches in DNA. It is required for dam-dependent methyl-directed DNA mismatch repair. May act as a 'molecular matchmaker', a protein that promotes the formation of a stable complex between two or more DNA-binding proteins in an ATP-dependent manner without itself being part of a final effector complex. The polypeptide is DNA mismatch repair protein MutL (Vibrio vulnificus (strain YJ016)).